The chain runs to 83 residues: Small ribosomal subunit protein eS21 (83 aa).

This sequence belongs to the eukaryotic ribosomal protein eS21 family. As to quaternary structure, component of the 40S small ribosomal subunit.

It is found in the cytoplasm. It localises to the cytosol. Its subcellular location is the rough endoplasmic reticulum. The polypeptide is Small ribosomal subunit protein eS21 (RpS21) (Spodoptera frugiperda (Fall armyworm)).